Consider the following 349-residue polypeptide: S-adenosylmethionine:tRNA ribosyltransferase-isomerase (349 aa).

The protein belongs to the QueA family. Monomer.

It localises to the cytoplasm. The enzyme catalyses 7-aminomethyl-7-carbaguanosine(34) in tRNA + S-adenosyl-L-methionine = epoxyqueuosine(34) in tRNA + adenine + L-methionine + 2 H(+). It participates in tRNA modification; tRNA-queuosine biosynthesis. In terms of biological role, transfers and isomerizes the ribose moiety from AdoMet to the 7-aminomethyl group of 7-deazaguanine (preQ1-tRNA) to give epoxyqueuosine (oQ-tRNA). The sequence is that of S-adenosylmethionine:tRNA ribosyltransferase-isomerase from Parabacteroides distasonis (strain ATCC 8503 / DSM 20701 / CIP 104284 / JCM 5825 / NCTC 11152).